We begin with the raw amino-acid sequence, 219 residues long: Cytidylate kinase (219 aa).

An ATP-binding site is contributed by 10–18 (GPAAAGKST).

This sequence belongs to the cytidylate kinase family. Type 1 subfamily.

Its subcellular location is the cytoplasm. It catalyses the reaction CMP + ATP = CDP + ADP. It carries out the reaction dCMP + ATP = dCDP + ADP. In Staphylococcus aureus (strain bovine RF122 / ET3-1), this protein is Cytidylate kinase.